Reading from the N-terminus, the 333-residue chain is Taste receptor type 2 member 38 (333 aa).

At 1 to 17 (MLTLTRIHTVSYEVRST) the chain is on the extracellular side. Residues 18 to 38 (FLFISVLEFAVGFLTNAFVFL) form a helical membrane-spanning segment. Over 39–55 (VNFWDVVKRQPLSNSDC) the chain is Cytoplasmic. The helical transmembrane segment at 56 to 76 (VLLCLSISRLFLHGLLFLSAI) threads the bilayer. Residues 77 to 94 (QLTHFQKLSEPLNHSYQA) are Extracellular-facing. Residues 95–115 (IIMLWMIANQANLWLAACLSL) traverse the membrane as a helical segment. At 116–142 (LYCSKLIRFSHTFLICLASWVSRKISQ) the chain is on the cytoplasmic side. The helical transmembrane segment at 143-163 (MLLGIILCSCICTVLCVWCFF) threads the bilayer. The Extracellular segment spans residues 164 to 190 (SRPHFTVTTVLFMNNNTRLNWQIKDLN). Asn-178 carries an N-linked (GlcNAc...) asparagine glycan. Residues 191–211 (LFYSFLFCYLWSVPPFLLFLV) traverse the membrane as a helical segment. Residues 212–251 (SSGMLTVSLGRHMRTMKVYTRDSRDPSLEAHIKALKSLVS) lie on the Cytoplasmic side of the membrane. A helical transmembrane segment spans residues 252-272 (FFCFFVISSCAAFISVPLLIL). Residues 273–276 (WRDK) lie on the Extracellular side of the membrane. A helical transmembrane segment spans residues 277–297 (IGVMVCVGIMAACPSGHAAVL). The Cytoplasmic portion of the chain corresponds to 298–333 (ISGNAKLRRAVTTILLWAQSSLKVRADHKADSRTLC).

Belongs to the G-protein coupled receptor T2R family.

The protein resides in the membrane. Receptor that may play a role in the perception of bitterness and is gustducin-linked. May play a role in sensing the chemical composition of the gastrointestinal content. The activity of this receptor may stimulate alpha gustducin, mediate PLC-beta-2 activation and lead to the gating of TRPM5. The polypeptide is Taste receptor type 2 member 38 (TAS2R38) (Pan troglodytes (Chimpanzee)).